The sequence spans 462 residues: Chitinase 1 (462 aa).

The N-terminal stretch at 1–17 (MILNLIILLAISIVASA) is a signal peptide. One can recognise a GH18 domain in the interval 18 to 291 (SNIAAYWGQN…NQLYQALSGS (274 aa)). A glycan (N-linked (GlcNAc...) asparagine) is linked at Asn-57. Glu-147 functions as the Proton donor in the catalytic mechanism.

It belongs to the glycosyl hydrolase 18 family. Chitinase class III subfamily.

The protein resides in the secreted. It carries out the reaction Random endo-hydrolysis of N-acetyl-beta-D-glucosaminide (1-&gt;4)-beta-linkages in chitin and chitodextrins.. The sequence is that of Chitinase 1 (CHT1) from Candida albicans (Yeast).